The following is a 329-amino-acid chain: MPVDISSLLHAGYSNPLLREWQGVRPITKSSLMYPIFISEIDDAKEAIDSMPNQFRWGVNRLEEFLGPLVKKGLRSVILFGVIESKKDYCGSMADSENGPVIKAVKEIRHLFPELVVACDVCLCEYTDHGHCGLLYEDGTINNAKSVERIAEVSGNYALAGAQIISPSDCMDGRVKAIKQKLVELELSHKVCVISYSAKFASGFFGPFRAAANGAPKFGDRSCYQLPCNARGLAKRAILRDVREGADGIMVKPGTPYLDILAMASKLADDLPIATYQVSGEFAIIHAAAAAGVFELKRHVMETMDGFMRAGANIVLTYFTPELLEWLEY.

Residues C122, C124, and C132 each contribute to the Zn(2+) site. K199 (schiff-base intermediate with substrate) is an active-site residue. Positions 209 and 221 each coordinate 5-aminolevulinate. Residue K252 is the Schiff-base intermediate with substrate of the active site. 5-aminolevulinate-binding residues include S279 and Y318.

It belongs to the ALAD family. Homooctamer. Zn(2+) is required as a cofactor.

It catalyses the reaction 2 5-aminolevulinate = porphobilinogen + 2 H2O + H(+). Its pathway is porphyrin-containing compound metabolism; protoporphyrin-IX biosynthesis; coproporphyrinogen-III from 5-aminolevulinate: step 1/4. Functionally, catalyzes an early step in the biosynthesis of tetrapyrroles. Binds two molecules of 5-aminolevulinate per subunit, each at a distinct site, and catalyzes their condensation to form porphobilinogen. This is Delta-aminolevulinic acid dehydratase (hem2) from Schizosaccharomyces pombe (strain 972 / ATCC 24843) (Fission yeast).